A 207-amino-acid chain; its full sequence is Small ribosomal subunit protein uS4 (207 aa).

The interval 31–54 is disordered; sequence KSKFETKPGQHGRTSGSRTSDFGL. The segment covering 42-52 has biased composition (polar residues); it reads GRTSGSRTSDF. An S4 RNA-binding domain is found at 97 to 158; that stretch reads SRLDNVVYRM…KAKKQLRVTE (62 aa).

Belongs to the universal ribosomal protein uS4 family. In terms of assembly, part of the 30S ribosomal subunit. Contacts protein S5. The interaction surface between S4 and S5 is involved in control of translational fidelity.

In terms of biological role, one of the primary rRNA binding proteins, it binds directly to 16S rRNA where it nucleates assembly of the body of the 30S subunit. Functionally, with S5 and S12 plays an important role in translational accuracy. The sequence is that of Small ribosomal subunit protein uS4 from Methylibium petroleiphilum (strain ATCC BAA-1232 / LMG 22953 / PM1).